A 118-amino-acid chain; its full sequence is M-zodatoxin-Lt8p (118 aa).

An N-terminal signal peptide occupies residues 1–3 (AES). Residues 4-43 (KPAESEHELAEVEEENELADLEDAVWLEHLADLSDLEEAR) constitute a propeptide that is removed on maturation.

It belongs to the cationic peptide 06 (cytoinsectotoxin) family. In terms of tissue distribution, expressed by the venom gland.

It is found in the secreted. Insecticidal, cytolytic and antimicrobial peptide. Forms voltage-dependent, ion-permeable channels in membranes. At high concentration causes cell membrane lysis. The chain is M-zodatoxin-Lt8p (cit 1-15) from Lachesana tarabaevi (Spider).